The following is a 340-amino-acid chain: Fructose-1,6-bisphosphatase, cytosolic (340 aa).

5 residues coordinate Mg(2+): glutamate 71, glutamate 100, aspartate 121, leucine 123, and aspartate 124. Substrate contacts are provided by residues 124-127 (DGSS), asparagine 215, tyrosine 247, tyrosine 267, and lysine 277. Glutamate 283 provides a ligand contact to Mg(2+).

This sequence belongs to the FBPase class 1 family. It depends on Mg(2+) as a cofactor.

Its subcellular location is the cytoplasm. The catalysed reaction is beta-D-fructose 1,6-bisphosphate + H2O = beta-D-fructose 6-phosphate + phosphate. In Solanum tuberosum (Potato), this protein is Fructose-1,6-bisphosphatase, cytosolic.